The sequence spans 892 residues: Phenylalanine--tRNA ligase beta subunit (892 aa).

Residues 39–150 (NPGVEGVVVG…PGLEPGMDVA (112 aa)) enclose the tRNA-binding domain. Residues 406–569 (AVPPVILLRT…RCEGYDAIPL (164 aa)) enclose the B5 domain. The interval 442 to 518 (VLTPADLAAD…ALLGGGESDG (77 aa)) is insert. Aspartate 547, aspartate 553, glutamate 556, and glutamate 557 together coordinate Mg(2+). In terms of domain architecture, FDX-ACB spans 799–891 (PRFPAVTRDV…ALKALGAELR (93 aa)).

It belongs to the phenylalanyl-tRNA synthetase beta subunit family. Type 1 subfamily. In terms of assembly, tetramer of two alpha and two beta subunits. Mg(2+) serves as cofactor.

The protein localises to the cytoplasm. The catalysed reaction is tRNA(Phe) + L-phenylalanine + ATP = L-phenylalanyl-tRNA(Phe) + AMP + diphosphate + H(+). The chain is Phenylalanine--tRNA ligase beta subunit from Symbiobacterium thermophilum (strain DSM 24528 / JCM 14929 / IAM 14863 / T).